Consider the following 485-residue polypeptide: Metalloprotease AprA (485 aa).

Position 187 (H187) interacts with Zn(2+). The active site involves E188. 2 residues coordinate Zn(2+): H191 and H197. Ca(2+) contacts are provided by R268, G270, T272, D300, G302, G303, D305, T342, E344, G349, G351, D353, N358, L360, N362, G366, G367, A368, G369, D371, G375, G376, G377, G378, D380, G384, G385, T386, G387, D389, D398, D405, D415, D461, T463, N465, S467, and D469. 3 Hemolysin-type calcium-binding repeats span residues 347-364, 365-382, and 383-395; these read FGGS…ANVL, KGGA…ADQL, and WGGT…VFGA.

The protein belongs to the peptidase M10B family. It depends on Ca(2+) as a cofactor. The cofactor is Zn(2+).

The protein localises to the secreted. Secreted protease which is important for P.entomophila to counteract the local immune response of Drosophila. Can degrade antimicrobial peptides (AMPs), e.g. Diptericin and Cecropin A. Thus, protects P.entomophila from the Drosophila antimicrobial peptides produced by the gut innate immune response, and promotes bacterial persistence in the Drosophila gut and killing of the host. Is responsible for maturation of pro-Monalysin to the active toxin Monalysin, by cleaving its N-terminus. The polypeptide is Metalloprotease AprA (Pseudomonas entomophila (strain L48)).